The chain runs to 405 residues: MDHLPMPKFGPLAGLRVVFSGIEIAGPFAGQMFAEWGAEVIWIENVAWADTIRVQPNYPQLSRRNLHALSLNIFKDEGREAFLKLMETTDIFIEASKGPAFARRGITDEVLWQHNPKLVIAHLSGFGQYGTEEYTNLPAYNTIAQAFSGYLIQNGDVDQPMPAFPYTADYFSGLTATTAALAALHKVRETGKGESIDIAMYEVMLRMGQYFMMDYFNGGEMCPRMSKGKDPYYAGCGLYKCADGYIVMELVGITQIEECFKDIGLAHLLGTPEIPEGTQLIHRIECPYGPLVEEKLDAWLATHTIAEVKERFAELNIACAKVLTVPELESNPQYVARESITQWQTMDGRTCKGPNIMPKFKNNPGQIWRGMPSHGMDTAAILKNIGYSENDIQELVSKGLAKVED.

CoA-binding residues include lysine 97 and arginine 104. Residue aspartate 169 is the Nucleophile of the active site.

It belongs to the CoA-transferase III family. CaiB subfamily. Homodimer.

The protein localises to the cytoplasm. It carries out the reaction crotonobetainyl-CoA + (R)-carnitine = crotonobetaine + (R)-carnitinyl-CoA. The catalysed reaction is 4-(trimethylamino)butanoyl-CoA + (R)-carnitine = (R)-carnitinyl-CoA + 4-(trimethylamino)butanoate. It participates in amine and polyamine metabolism; carnitine metabolism. Catalyzes the reversible transfer of the CoA moiety from gamma-butyrobetainyl-CoA to L-carnitine to generate L-carnitinyl-CoA and gamma-butyrobetaine. Is also able to catalyze the reversible transfer of the CoA moiety from gamma-butyrobetainyl-CoA or L-carnitinyl-CoA to crotonobetaine to generate crotonobetainyl-CoA. In Escherichia coli (strain K12 / MC4100 / BW2952), this protein is L-carnitine CoA-transferase.